Reading from the N-terminus, the 435-residue chain is UPF0597 protein AHA_4077 (435 aa).

Belongs to the UPF0597 family.

The sequence is that of UPF0597 protein AHA_4077 from Aeromonas hydrophila subsp. hydrophila (strain ATCC 7966 / DSM 30187 / BCRC 13018 / CCUG 14551 / JCM 1027 / KCTC 2358 / NCIMB 9240 / NCTC 8049).